A 331-amino-acid polypeptide reads, in one-letter code: ADP-L-glycero-D-manno-heptose-6-epimerase (331 aa).

Residues 11-12 (FI), 32-33 (DN), Lys-39, Lys-54, 75-79 (EGACS), and Asn-92 each bind NADP(+). The active-site Proton acceptor is the Tyr-139. Lys-143 lines the NADP(+) pocket. Asn-168 is a substrate binding site. 2 residues coordinate NADP(+): Val-169 and Lys-177. Residue Lys-177 is the Proton acceptor of the active site. Substrate is bound by residues Arg-179, His-186, 200–203 (FGEY), Arg-213, and Tyr-292.

The protein belongs to the NAD(P)-dependent epimerase/dehydratase family. HldD subfamily. In terms of assembly, homopentamer. It depends on NADP(+) as a cofactor.

The catalysed reaction is ADP-D-glycero-beta-D-manno-heptose = ADP-L-glycero-beta-D-manno-heptose. Its pathway is nucleotide-sugar biosynthesis; ADP-L-glycero-beta-D-manno-heptose biosynthesis; ADP-L-glycero-beta-D-manno-heptose from D-glycero-beta-D-manno-heptose 7-phosphate: step 4/4. Its function is as follows. Catalyzes the interconversion between ADP-D-glycero-beta-D-manno-heptose and ADP-L-glycero-beta-D-manno-heptose via an epimerization at carbon 6 of the heptose. This Cupriavidus necator (strain ATCC 17699 / DSM 428 / KCTC 22496 / NCIMB 10442 / H16 / Stanier 337) (Ralstonia eutropha) protein is ADP-L-glycero-D-manno-heptose-6-epimerase.